Reading from the N-terminus, the 435-residue chain is Uracil permease (435 aa).

The next 12 helical transmembrane spans lie at 17 to 37 (FSWV…TILV), 42 to 62 (GMSP…YLLI), 67 to 87 (IPAY…VKAT), 91 to 111 (GAAM…ALLI), 122 to 142 (ILPP…LAST), 161 to 181 (LKHF…AIFL), 191 to 213 (LIGI…QPVL), 234 to 254 (VTLG…SEHI), 311 to 331 (VFSV…GFIG), 336 to 356 (LISS…FGII), 376 to 396 (NLII…IQVS), and 399 to 419 (GFQV…NLIL).

This sequence belongs to the nucleobase:cation symporter-2 (NCS2) (TC 2.A.40) family.

It is found in the cell membrane. Functionally, transport of uracil in the cell. This is Uracil permease (pyrP) from Bacillus subtilis (strain 168).